A 1188-amino-acid chain; its full sequence is DNA-directed RNA polymerase subunit beta (1188 aa).

It belongs to the RNA polymerase beta chain family. The RNAP catalytic core consists of 2 alpha, 1 beta, 1 beta' and 1 omega subunit. When a sigma factor is associated with the core the holoenzyme is formed, which can initiate transcription.

It catalyses the reaction RNA(n) + a ribonucleoside 5'-triphosphate = RNA(n+1) + diphosphate. In terms of biological role, DNA-dependent RNA polymerase catalyzes the transcription of DNA into RNA using the four ribonucleoside triphosphates as substrates. The sequence is that of DNA-directed RNA polymerase subunit beta from Streptococcus gordonii (strain Challis / ATCC 35105 / BCRC 15272 / CH1 / DL1 / V288).